A 258-amino-acid chain; its full sequence is Acetylglutamate kinase (258 aa).

Substrate-binding positions include 44-45 (GG), arginine 66, and asparagine 158. ATP is bound by residues 181 to 186 (DVSGIL) and 209 to 211 (IIT).

This sequence belongs to the acetylglutamate kinase family. ArgB subfamily. Homodimer.

It is found in the cytoplasm. It carries out the reaction N-acetyl-L-glutamate + ATP = N-acetyl-L-glutamyl 5-phosphate + ADP. The protein operates within amino-acid biosynthesis; L-arginine biosynthesis; N(2)-acetyl-L-ornithine from L-glutamate: step 2/4. Its function is as follows. Catalyzes the ATP-dependent phosphorylation of N-acetyl-L-glutamate. This is Acetylglutamate kinase from Salmonella arizonae (strain ATCC BAA-731 / CDC346-86 / RSK2980).